The primary structure comprises 461 residues: General transcription and DNA repair factor IIH subunit SSL1 (461 aa).

The interval 1-70 is disordered; sequence MAPVVISESE…RLSNRNLQGS (70 aa). Over residues 26-37 the composition is skewed to basic and acidic residues; sequence VHFDGEGDDRVD. The span at 53–63 shows a compositional bias: basic residues; the sequence is HVQRKKKKRLS. The 180-residue stretch at 125–304 folds into the VWFA domain; it reads SLILTLDCSE…THLKELFNEA (180 aa). The C4-type zinc finger occupies 349–366; the sequence is CPNCHSKVCSLPTVCPCC.

It belongs to the GTF2H2 family. As to quaternary structure, component of the 7-subunit TFIIH core complex composed of XPB/SSL2, XPD/RAD3, SSL1, TFB1, TFB2, TFB4 and TFB5, which is active in NER. The core complex associates with the 3-subunit CTD-kinase module TFIIK composed of CCL1, KIN28 and TFB3 to form the 10-subunit holoenzyme (holo-TFIIH) active in transcription. An additionnal subunit, TFB6, plays a role in the dissociation of the SSL2 helicase from TFIIH after transcription initiation.

It localises to the nucleus. In terms of biological role, component of the general transcription and DNA repair factor IIH (TFIIH) core complex, which is involved in general and transcription-coupled nucleotide excision repair (NER) of damaged DNA and, when complexed to TFIIK, in RNA transcription by RNA polymerase II. In NER, TFIIH acts by opening DNA around the lesion to allow the excision of the damaged oligonucleotide and its replacement by a new DNA fragment. In transcription, TFIIH has an essential role in transcription initiation. When the pre-initiation complex (PIC) has been established, TFIIH is required for promoter opening and promoter escape. Phosphorylation of the C-terminal tail (CTD) of the largest subunit of RNA polymerase II by the kinase module TFIIK controls the initiation of transcription. This is General transcription and DNA repair factor IIH subunit SSL1 (SSL1) from Saccharomyces cerevisiae (strain ATCC 204508 / S288c) (Baker's yeast).